We begin with the raw amino-acid sequence, 190 residues long: MEVILLERVAKLGQMGETVNVRPGYARNFLLARGKALRATENNKKHFEAQRAQLEARNLERRNEAQTVAEKLDGQSFVLIRQSGETGVLYGSVSTRDLAEVVTKEGFSVERGQFVLNQPIKTLGLHTVPVTLHPEVEVKVTVNIARSPEEAERQARGESVTEREQFNLDDLGLEVGQALADAGEGADDRG.

It belongs to the bacterial ribosomal protein bL9 family.

Binds to the 23S rRNA. In Methylorubrum extorquens (strain CM4 / NCIMB 13688) (Methylobacterium extorquens), this protein is Large ribosomal subunit protein bL9.